We begin with the raw amino-acid sequence, 95 residues long: Large ribosomal subunit protein bL25 (95 aa).

This sequence belongs to the bacterial ribosomal protein bL25 family. Part of the 50S ribosomal subunit; part of the 5S rRNA/L5/L18/L25 subcomplex. Contacts the 5S rRNA. Binds to the 5S rRNA independently of L5 and L18.

This is one of the proteins that binds to the 5S RNA in the ribosome where it forms part of the central protuberance. The sequence is that of Large ribosomal subunit protein bL25 from Tolumonas auensis (strain DSM 9187 / NBRC 110442 / TA 4).